Consider the following 501-residue polypeptide: MTQAVKLASRVFHRVQLPSQLGSDSVLRSLSDIPGPSTPSFLAELFCKGGLSRLHELQVHGAARYGPIWSGSFGTLRTVYVADPALVEQLLRQESHCPERCSFSSWSEHRRRHQRACGLLTADGEEWQRLRSLLAPLLLRPQAAAGYAGTLDSVVSDLVRRLRRQRGRGSGLPDLVLDVAGEFYKFGLEGIGAVLLGSRLGCLEAEVPPDTETFIEAVGSVFVSTLLTMAMPSWLHRLIPGPWARLCRDWDQMFAFAQKHVEQREGEAAVRNQGKPEEDLPTGHHLTHFLFREKVSVQSIVGNVTELLLAGVDTVSNTLSWALYELSRHPEVQSALHSEITGAVNPGSYAHLQATALSQLPLLKAVIKEVLRLYPVVPGNSRVPDRDICVGNYVIPQDTLVSLCHYATSRDPAQFREPNSFNPARWLGEGPAPHPFASLPFGFGKRSCIGRRLAELELQMALAQILTHFEVLPEPGALPVKPMTRTVLVPERSIHLQFVDR.

Cys-448 is a binding site for heme.

This sequence belongs to the cytochrome P450 family. Heme is required as a cofactor. In terms of tissue distribution, kidney.

It localises to the mitochondrion membrane. It carries out the reaction calcidiol + 2 reduced [adrenodoxin] + O2 + 2 H(+) = calcitriol + 2 oxidized [adrenodoxin] + H2O. It catalyses the reaction secalciferol + 2 reduced [adrenodoxin] + O2 + 2 H(+) = calcitetrol + 2 oxidized [adrenodoxin] + H2O. It functions in the pathway hormone biosynthesis; cholecalciferol biosynthesis. Catalyzes the conversion of 25-hydroxyvitamin D3 (25(OH)D3) to 1-alpha,25-dihydroxyvitamin D3 (1alpha,25(OH)(2)D3), and of 24,25-dihydroxyvitamin D3 (24,25(OH)(2)D3) to 1-alpha,24,25-trihydroxyvitamin D3 (1alpha,24,25(OH)(3)D3). Is also active with 25-hydroxy-24-oxo-vitamin D3. Plays an important role in normal bone growth, calcium metabolism, and tissue differentiation. The polypeptide is 25-hydroxyvitamin D-1 alpha hydroxylase, mitochondrial (Cyp27b1) (Rattus norvegicus (Rat)).